We begin with the raw amino-acid sequence, 375 residues long: Probable butyrate kinase 2 (375 aa).

It belongs to the acetokinase family.

The protein resides in the cytoplasm. The catalysed reaction is butanoate + ATP = butanoyl phosphate + ADP. The chain is Probable butyrate kinase 2 from Thermotoga maritima (strain ATCC 43589 / DSM 3109 / JCM 10099 / NBRC 100826 / MSB8).